The sequence spans 216 residues: Putative cat eye syndrome critical region protein 9 (216 aa).

The N-terminal stretch at 1–23 is a signal peptide; it reads MQSHLAPLACAAAAGRAGGSCQA. Residue Asn148 is glycosylated (N-linked (GlcNAc...) asparagine).

As to expression, ubiquitously expressed with higher expression in heart.

The protein resides in the secreted. This Homo sapiens (Human) protein is Putative cat eye syndrome critical region protein 9 (CECR9).